The primary structure comprises 326 residues: GTPase IMAP family member 5 (326 aa).

Over 1–297 (MEDHGFEELS…MLCRVTSCLD (297 aa)) the chain is Cytoplasmic. One can recognise an AIG1-type G domain in the interval 42–245 (SGLLRILLVG…HSNDLFVYTQ (204 aa)). GTP-binding positions include 51 to 59 (GKSGCGKSA), Ser-72, 169 to 171 (HKE), and Asn-206. The helical; Anchor for type IV membrane protein transmembrane segment at 298 to 318 (WHIAVSVLLIVLGLTLLITLI) threads the bilayer. Over 319 to 326 (NMYIGRWK) the chain is Lumenal.

The protein belongs to the TRAFAC class TrmE-Era-EngA-EngB-Septin-like GTPase superfamily. AIG1/Toc34/Toc159-like paraseptin GTPase family. IAN subfamily. Interacts with BAD, BAK1, BAX, BCL2, BCL2L1/Bcl-xL and BCL2L11/BimEL. The interaction with BAX is increased, when cells initiate apoptosis upon IL2 withdrawal. Forms a complex with BCL2L1 or MCL1 and HSPA8/HSC70; the interaction between HSPA8 and BCL2L1 or MCL1 is impaired in the absence of GIMAP5. May interact (via N-terminus) with microtubules. Primarily expressed in spleen, heart, lung and intestine and, at lower levels, in kidney, stomach and muscle. Expressed in thymus and lymph nodes (at protein level). In the spleen, expressed in periarteriolar lymphatic sheets. Isoform 2: Expressed at higher levels in T lymphocytes compared to isoform 1.

The protein resides in the lysosome membrane. It is found in the endosome. Its subcellular location is the multivesicular body membrane. The protein localises to the endosome membrane. In terms of biological role, required for mitochondrial integrity and T-cell survival. May contribute to T-cell quiescence. Functionally, plays a role in T lymphocyte development and the optimal generation of CD4/CD8 double-positive thymocytes. Inhibitor of GSK3A, possibly by sequestering GSK3A in cytoplasmic vesicles and impairing its translocation to the nucleus. Consequently, impairs GSK3A-dependent transcriptional program and regulation of the DNA damage response occurring during T cells proliferation. Required for the survival of peripheral T cells, natural killer (NK) and NK T-cell development and the maintenance of normal liver function. Promotes the survival of quiescent T-cells. May regulate Ca(2+) homeostasis by modulating lysosomal Ca(2+) stores, preventing its accumulation in the absence of T cell activation. May play a role in mitochondrial DNA segregation in hematopoietic tissues. Is a regulator of liver endothelial cell homeostasis. The polypeptide is GTPase IMAP family member 5 (Gimap5) (Rattus norvegicus (Rat)).